The sequence spans 525 residues: G-protein regulator 1 (525 aa).

One can recognise a GoLoco domain in the interval 424 to 445 (PVDMMDLIFSMSSRMDDQRTEL). Residues 488 to 525 (HTMNRILKRSKKSKSSLDSTNSMQGDDTRSDDVTMTSK) form a disordered region.

Interacts with gpr-1, lin-5 and GDP-bound goa-1.

The protein resides in the cytoplasm. Its subcellular location is the cell cortex. It localises to the cytoskeleton. The protein localises to the spindle. Its function is as follows. In the 1-cell embryo, probably together with gpr-2, controls nuclear rotation and spindle elongation during mitosis. Complex of gpr-1 and gpr-2, in association with lin-5, activates G-protein signaling to affect mitotic spindle force. Polarity determinants (par genes) may regulate lin-5/gpr-1/gpr-2/goa-1 locally to create the asymmetric forces that drive spindle movement. This chain is G-protein regulator 1 (gpr-1), found in Caenorhabditis elegans.